The chain runs to 543 residues: Myotubularin-related protein 9-like (543 aa).

The Myotubularin phosphatase domain maps to 124 to 502 (AWHFHPPECY…QSLRLWQGLF (379 aa)).

Belongs to the protein-tyrosine phosphatase family. Non-receptor class myotubularin subfamily.

Its function is as follows. Probable pseudophosphatase. The protein is Myotubularin-related protein 9-like of Bos taurus (Bovine).